Consider the following 480-residue polypeptide: Siroheme synthase (480 aa).

The precorrin-2 dehydrogenase /sirohydrochlorin ferrochelatase stretch occupies residues 1–203 (MNYFPIFANL…QQTAQAEQEL (203 aa)). NAD(+)-binding positions include 22-23 (SV) and 43-44 (NQ). Position 128 is a phosphoserine (Ser-128). Residues 214–480 (GFVSLVGAGP…GGLNAGQRAA (267 aa)) form a uroporphyrinogen-III C-methyltransferase region. Pro-223 contacts S-adenosyl-L-methionine. Asp-246 functions as the Proton acceptor in the catalytic mechanism. The Proton donor role is filled by Lys-268. S-adenosyl-L-methionine contacts are provided by residues 299 to 301 (GGD), Val-304, 329 to 330 (TA), Met-381, and Gly-410.

In the N-terminal section; belongs to the precorrin-2 dehydrogenase / sirohydrochlorin ferrochelatase family. It in the C-terminal section; belongs to the precorrin methyltransferase family.

It carries out the reaction uroporphyrinogen III + 2 S-adenosyl-L-methionine = precorrin-2 + 2 S-adenosyl-L-homocysteine + H(+). It catalyses the reaction precorrin-2 + NAD(+) = sirohydrochlorin + NADH + 2 H(+). The enzyme catalyses siroheme + 2 H(+) = sirohydrochlorin + Fe(2+). It functions in the pathway cofactor biosynthesis; adenosylcobalamin biosynthesis; precorrin-2 from uroporphyrinogen III: step 1/1. It participates in cofactor biosynthesis; adenosylcobalamin biosynthesis; sirohydrochlorin from precorrin-2: step 1/1. The protein operates within porphyrin-containing compound metabolism; siroheme biosynthesis; precorrin-2 from uroporphyrinogen III: step 1/1. Its pathway is porphyrin-containing compound metabolism; siroheme biosynthesis; siroheme from sirohydrochlorin: step 1/1. It functions in the pathway porphyrin-containing compound metabolism; siroheme biosynthesis; sirohydrochlorin from precorrin-2: step 1/1. In terms of biological role, multifunctional enzyme that catalyzes the SAM-dependent methylations of uroporphyrinogen III at position C-2 and C-7 to form precorrin-2 via precorrin-1. Then it catalyzes the NAD-dependent ring dehydrogenation of precorrin-2 to yield sirohydrochlorin. Finally, it catalyzes the ferrochelation of sirohydrochlorin to yield siroheme. The sequence is that of Siroheme synthase from Neisseria meningitidis serogroup C (strain 053442).